A 521-amino-acid chain; its full sequence is 56 kDa type-specific antigen (521 aa).

A signal peptide spans 1–22 (MRKIMLIASAMSALSLPFSANA). The helical transmembrane segment at 64–86 (LPLIKGMPFGVTLAAGMTITPGV) threads the bilayer. Residues 386-415 (LGVDQGQEGGCSKDKKQSDTTAEESKKEGK) are disordered. The segment covering 396–415 (CSKDKKQSDTTAEESKKEGK) has biased composition (basic and acidic residues). Residues 469–484 (TGMVGSLALGVAANVA) form a helical membrane-spanning segment.

It localises to the cell membrane. In terms of biological role, may be an adherent factor for rickettsial adsorption to the host-cell surface and a determinant of virulence of individual rickettsial strain. It is the major outer membrane protein. This is 56 kDa type-specific antigen from Orientia tsutsugamushi (Rickettsia tsutsugamushi).